The chain runs to 352 residues: UDP-N-acetylglucosamine--N-acetylmuramyl-(pentapeptide) pyrophosphoryl-undecaprenol N-acetylglucosamine transferase 2 (352 aa).

Residues 11-13, Arg164, Ser194, and Gln289 contribute to the UDP-N-acetyl-alpha-D-glucosamine site; that span reads SAG.

The protein belongs to the glycosyltransferase 28 family. MurG subfamily.

It is found in the cell membrane. The enzyme catalyses di-trans,octa-cis-undecaprenyl diphospho-N-acetyl-alpha-D-muramoyl-L-alanyl-D-glutamyl-meso-2,6-diaminopimeloyl-D-alanyl-D-alanine + UDP-N-acetyl-alpha-D-glucosamine = di-trans,octa-cis-undecaprenyl diphospho-[N-acetyl-alpha-D-glucosaminyl-(1-&gt;4)]-N-acetyl-alpha-D-muramoyl-L-alanyl-D-glutamyl-meso-2,6-diaminopimeloyl-D-alanyl-D-alanine + UDP + H(+). The protein operates within cell wall biogenesis; peptidoglycan biosynthesis. Cell wall formation. Catalyzes the transfer of a GlcNAc subunit on undecaprenyl-pyrophosphoryl-MurNAc-pentapeptide (lipid intermediate I) to form undecaprenyl-pyrophosphoryl-MurNAc-(pentapeptide)GlcNAc (lipid intermediate II). This chain is UDP-N-acetylglucosamine--N-acetylmuramyl-(pentapeptide) pyrophosphoryl-undecaprenol N-acetylglucosamine transferase 2, found in Bacillus anthracis.